We begin with the raw amino-acid sequence, 409 residues long: Ingression protein 1 (409 aa).

The region spanning 1–114 is the C2 domain; it reads MSEEVWNGNQ…DPKEGYCTWY (114 aa). Positions 300–409 are disordered; that stretch reads LSYDEDDDDD…TRKRPPPRLS (110 aa). A compositionally biased stretch (acidic residues) spans 302–313; sequence YDEDDDDDDEND. The segment covering 315–328 has biased composition (polar residues); the sequence is FYSSSHRVSHNYNQ. Residues 360-377 show a composition bias toward low complexity; it reads LDSSSPNSHPHPSGLNSP. Positions 384–399 are enriched in polar residues; it reads TTSNSNFNSRKNSMSP. Ser392 carries the phosphoserine modification. Positions 400–409 are enriched in basic residues; the sequence is TRKRPPPRLS.

This sequence belongs to the INN1/fic1 family. Interacts with CYK2, CYK3 and IQG1.

It localises to the bud neck. In terms of biological role, required for the ingression of the plasma membrane into the bud neck at the end of cytokinesis, leading to the separation of the mother and daughter cells. Stimulates the synthesis of the primary septum (PS) by CHS2. This is Ingression protein 1 (INN1) from Saccharomyces cerevisiae (strain ATCC 204508 / S288c) (Baker's yeast).